The following is a 324-amino-acid chain: Interleukin-12 subunit beta (324 aa).

The first 22 residues, 1–22 (MHLQQLVVSWFSLVWLASPIVA), serve as a signal peptide directing secretion. The Ig-like C2-type domain occupies 23-106 (IWELEKNVYV…LSQSLLLLHK (84 aa)). The cysteines at positions 50 and 90 are disulfide-linked. 3 N-linked (GlcNAc...) asparagine glycosylation sites follow: Asn125, Asn135, and Asn218. The Fibronectin type-III domain occupies 233–324 (PPKNLQLNPL…WSEWASVSCN (92 aa)).

Belongs to the IL-12B family. As to quaternary structure, heterodimer with IL12A; disulfide-linked. The heterodimer is known as interleukin IL-12. Heterodimer with IL23A; disulfide-linked. The heterodimer is known as interleukin IL-23. Also secreted as a monomer. Interacts with NBR1; this interaction promotes IL-12 secretion.

The protein localises to the secreted. In terms of biological role, cytokine that can act as a growth factor for activated T and NK cells, enhance the lytic activity of NK/lymphokine-activated killer cells, and stimulate the production of IFN-gamma by resting PBMC. Its function is as follows. Associates with IL23A to form the IL-23 interleukin, a heterodimeric cytokine which functions in innate and adaptive immunity. IL-23 may constitute with IL-17 an acute response to infection in peripheral tissues. IL-23 binds to a heterodimeric receptor complex composed of IL12RB1 and IL23R, activates the Jak-Stat signaling cascade, stimulates memory rather than naive T-cells and promotes production of pro-inflammatory cytokines. IL-23 induces autoimmune inflammation and thus may be responsible for autoimmune inflammatory diseases and may be important for tumorigenesis. This Sus scrofa (Pig) protein is Interleukin-12 subunit beta (IL12B).